The chain runs to 410 residues: Retrovirus-related Pol polyprotein from type-1 retrotransposable element R1 2 (410 aa).

One can recognise a Reverse transcriptase domain in the interval 1–118; that stretch reads GCPQGSIGGP…SCFRYLGVNV (118 aa). The nucleic acid-binding endonuclease stretch occupies residues 254 to 410; the sequence is SSVIKLERLV…RLNLELDVNG (157 aa).

The catalysed reaction is DNA(n) + a 2'-deoxyribonucleoside 5'-triphosphate = DNA(n+1) + diphosphate. This Nasonia vitripennis (Parasitic wasp) protein is Retrovirus-related Pol polyprotein from type-1 retrotransposable element R1 2.